The primary structure comprises 337 residues: tRNA N6-adenosine threonylcarbamoyltransferase (337 aa).

The Fe cation site is built by histidine 111 and histidine 115. Substrate contacts are provided by residues 134-138 (LVSGG), aspartate 167, glycine 180, and asparagine 272. Residue aspartate 300 participates in Fe cation binding.

Belongs to the KAE1 / TsaD family. It depends on Fe(2+) as a cofactor.

Its subcellular location is the cytoplasm. The enzyme catalyses L-threonylcarbamoyladenylate + adenosine(37) in tRNA = N(6)-L-threonylcarbamoyladenosine(37) in tRNA + AMP + H(+). Its function is as follows. Required for the formation of a threonylcarbamoyl group on adenosine at position 37 (t(6)A37) in tRNAs that read codons beginning with adenine. Is involved in the transfer of the threonylcarbamoyl moiety of threonylcarbamoyl-AMP (TC-AMP) to the N6 group of A37, together with TsaE and TsaB. TsaD likely plays a direct catalytic role in this reaction. The chain is tRNA N6-adenosine threonylcarbamoyltransferase from Aeromonas salmonicida (strain A449).